The chain runs to 98 residues: DNA-binding protein Fis (98 aa).

The segment at residues 74–93 (QTRAALMMGINRGTLRKKLK) is a DNA-binding region (H-T-H motif).

Belongs to the transcriptional regulatory Fis family. As to quaternary structure, homodimer.

Activates ribosomal RNA transcription. Plays a direct role in upstream activation of rRNA promoters. In Yersinia enterocolitica serotype O:8 / biotype 1B (strain NCTC 13174 / 8081), this protein is DNA-binding protein Fis.